The following is a 564-amino-acid chain: M protein, serotype 12 (564 aa).

The N-terminal stretch at 1–41 (MAKNTTNRHYSLRKLKTGTASVAVALTVVGAGLVAGQTVRA) is a signal peptide. Residues 44–505 (SDLVAEKQRL…RAGKASDSQT (462 aa)) are a coiled coil. 4 C repeats span residues 285-319 (KQLE…EAEL), 327-361 (AKVT…VEAA), 363-397 (KQLE…EKDL), and 405-439 (DKVK…EKAL). 2 disordered regions span residues 372–391 (SEAS…EAKK) and 404–438 (LDKV…VEKA). 2 stretches are compositionally biased toward basic and acidic residues: residues 404–413 (LDKVKEEKQI) and 421–438 (LRRD…VEKA). D repeat units follow at residues 472–477 (AKLEAE), 478–483 (AKALKE), 486–491 (AKQAEE), and 493–498 (AKLRAG). The disordered stretch occupies residues 493–550 (AKLRAGKASDSQTPDAKPGNKAVPGKGQAPQAGTKPNQNKAPMKETKRQLPSTGETAN). Positions 542–546 (LPSTG) match the LPXTG sorting signal motif. Thr545 is modified (pentaglycyl murein peptidoglycan amidated threonine). Positions 546 to 564 (GETANPFFTAAALTVMAAA) are cleaved as a propeptide — removed by sortase.

This sequence belongs to the M protein family.

The protein resides in the secreted. Its subcellular location is the cell wall. Its function is as follows. This protein is one of the different antigenic serotypes of protein M. Protein M is closely associated with virulence of the bacterium and can render the organism resistant to phagocytosis. The polypeptide is M protein, serotype 12 (emm12) (Streptococcus pyogenes).